Reading from the N-terminus, the 840-residue chain is MQEQEISFIFKYNEGLCMNIDSDSILMSILDMSLHQQMGSDRDLQSSTSSVSLPSVKKAPKQRRISIGSLFRRKKDSKRKSRELNGGVDGIASIESIHSEMCADKNSIFSTNTSSDNGLTSISKQIGDFIECPLCLLRHSKDRFPDIMTCHHRSCVDCLRQYLRIEISESRVNISCPECTERFNPHDIRLILSDDVLMEKYEEFMLRRWLVADPDCRWCPAPDCGYAVIAFGCASCPKLTCGREGCGTEFCYHCKQIWHPNQTCDAARQERAQSLRLRTIRSSSISYSQESGAAADDIKPCPRCAAYIIKMNDGSCNHMTCAVCGCEFCWLCMKEISDLHYLSPSGCTFWGKKPWSRKKKILWQLGTLVGAPVGIALIAGIAIPAMIIGIPVYVGRKIHNRYEGKDVSKHKRNLAIAGGVTLSVIVSPVVAAVTVGIGVPIMLAYVYGVVPISLCRSGGCGVSAGNGKGVRIEFDDENDINVGGTNAAIDTTSVAEARHNPSIGEGSVGGLTGSLSASGSHMDRIGTIRDNLSETASTMALAGASITGSLSGSAMVNCFNRLEVQADVQKERCSLSGESGTVSLGTVSDNASTKAMAGSILNSYIPLDREGNSMEVQVDIESKPFKFRHNSGSSSVDDSGATRGHTGGASSGLPEGKSSATKWSKEATGGKKSKSGKLRKKGNMKINETREDMDAQLLEQQSTNSSEFEAPSLSDSMPSVADSHSSHFSEFSCSDLESMRTSCSHGSSDCHARFTAVNTLPEVENDRLENSPHQCSSALLSKAASCSDVPQPSHAADEHGTSRSGGKPMVDLCFGDALRETNNNHSHQTADLKVAVQTEI.

The tract at residues 40-61 (SDRDLQSSTSSVSLPSVKKAPK) is disordered. Residues 45 to 56 (QSSTSSVSLPSV) show a composition bias toward low complexity. The TRIAD supradomain stretch occupies residues 128 to 351 (DFIECPLCLL…LSPSGCTFWG (224 aa)). Residues C132, C135, C150, H152, C155, C158, C176, C179, C219, C224, C241, C246, C251, C254, H259, C264, C301, and C304 each contribute to the Zn(2+) site. The RING-type 1 zinc finger occupies 132 to 179 (CPLCLLRHSKDRFPDIMTCHHRSCVDCLRQYLRIEISESRVNISCPEC). Residues 199–264 (EKYEEFMLRR…KQIWHPNQTC (66 aa)) form an IBR-type zinc finger. Residues 301 to 332 (CPRCAAYIIKMNDGSCNHMTCAVCGCEFCWLC) form an RING-type 2; atypical zinc finger. C316 is an active-site residue. C321, C324, C329, C332, H340, and C347 together coordinate Zn(2+). 2 consecutive transmembrane segments (helical) span residues 368–388 (LVGAPVGIALIAGIAIPAMII) and 424–444 (VIVSPVVAAVTVGIGVPIMLA). Disordered regions lie at residues 625-685 (FKFR…GNMK), 700-721 (QQSTNSSEFEAPSLSDSMPSVA), and 786-808 (CSDVPQPSHAADEHGTSRSGGKP). Residue S631 is modified to Phosphoserine. The interval 660–840 (ATKWSKEATG…DLKVAVQTEI (181 aa)) is interaction with CASR. Over residues 671–683 (KKSKSGKLRKKGN) the composition is skewed to basic residues. Polar residues predominate over residues 700 to 717 (QQSTNSSEFEAPSLSDSM).

It belongs to the RBR family. RNF19 subfamily. As to quaternary structure, interacts with UBE2L3 and UBE2L6. Also interacts with transcription factor Sp1. Interacts with SNCAIP and CASR. Interacts with VCP.

The protein resides in the membrane. The protein localises to the cytoplasm. It is found in the cytoskeleton. It localises to the microtubule organizing center. Its subcellular location is the centrosome. The enzyme catalyses [E2 ubiquitin-conjugating enzyme]-S-ubiquitinyl-L-cysteine + [acceptor protein]-L-lysine = [E2 ubiquitin-conjugating enzyme]-L-cysteine + [acceptor protein]-N(6)-ubiquitinyl-L-lysine.. The protein operates within protein modification; protein ubiquitination. In terms of biological role, E3 ubiquitin-protein ligase which accepts ubiquitin from E2 ubiquitin-conjugating enzymes UBE2L3 and UBE2L6 in the form of a thioester and then directly transfers the ubiquitin to targeted substrates, such as SNCAIP or CASR. The chain is E3 ubiquitin-protein ligase RNF19A (Rnf19a) from Mus musculus (Mouse).